The chain runs to 365 residues: MAAAVTAAVSFPSTKSTPLSTRTSSVITHEKINFNKVPLYYRNVSVGGKVGTIRAVASDVEAPVAKVEKHSKKMEEGVIVNKYKPKNPYTGRCLLNTKITGDDAPGETWHMVFSHEGEIPYREGQSVGVIPEGIDKNGKPHKLRLYSIASRPLGDFGDSKTVSLCVKRLIYTNDNGEIVKGVCSNFLCDLKPGSEVVLTGPVGKEMLMPKDPNATIIMLATGTGIAPFRSFLWKMFFEKHDDYKFNGLAWLFLGVPTSSSLLYKEEFEKMKEKAPENFRLDFAVSREQTNEKGEKMYIQTRMAQYDRELWELLKKDNTYVYMCGLKGMEKGIDDIMVSLAAEDGIDWFDYKKQLKKAEQWNVEVY.

The interval 1–22 (MAAAVTAAVSFPSTKSTPLSTR) is disordered. Positions 11 to 22 (FPSTKSTPLSTR) are enriched in polar residues. The 123-residue stretch at 86 to 208 (KNPYTGRCLL…TGPVGKEMLM (123 aa)) folds into the FAD-binding FR-type domain. Residues 144–147 (RLYS), 165–167 (CVK), Y171, 182–184 (VCS), and T223 contribute to the FAD site. The NADP(+) site is built by S147 and K167. NADP(+) is bound by residues T223, 255–256 (VP), 285–286 (SR), K295, 324–325 (GL), and E363.

The protein belongs to the ferredoxin--NADP reductase type 1 family. FAD serves as cofactor.

It is found in the plastid. The protein resides in the chloroplast stroma. The protein localises to the chloroplast thylakoid membrane. The catalysed reaction is 2 reduced [2Fe-2S]-[ferredoxin] + NADP(+) + H(+) = 2 oxidized [2Fe-2S]-[ferredoxin] + NADPH. It functions in the pathway energy metabolism; photosynthesis. Its function is as follows. May play a key role in regulating the relative amounts of cyclic and non-cyclic electron flow to meet the demands of the plant for ATP and reducing power. This Mesembryanthemum crystallinum (Common ice plant) protein is Ferredoxin--NADP reductase, chloroplastic (PETH).